The chain runs to 709 residues: Probable lanosterol 14-alpha demethylase (709 aa).

Position 425 (Cys-425) interacts with heme.

The protein belongs to the cytochrome P450 family. The cofactor is heme.

Its subcellular location is the membrane. The enzyme catalyses a 14alpha-methyl steroid + 3 reduced [NADPH--hemoprotein reductase] + 3 O2 = a Delta(14) steroid + formate + 3 oxidized [NADPH--hemoprotein reductase] + 4 H2O + 4 H(+). The protein operates within steroid biosynthesis; zymosterol biosynthesis; zymosterol from lanosterol: step 1/6. Functionally, catalyzes the 14-alpha demethylation of obtusifoliol to 4 alpha-methyl-5 alpha-ergosta-8,14,24(28)-trien-3 beta-ol. The sequence is that of Probable lanosterol 14-alpha demethylase from Acanthamoeba polyphaga (Amoeba).